Here is a 350-residue protein sequence, read N- to C-terminus: GDSL esterase/lipase At2g04570 (350 aa).

The first 23 residues, 1-23 (MGHLKSLFTILFLIAMSSTVTFA), serve as a signal peptide directing secretion. The Nucleophile role is filled by serine 35. N-linked (GlcNAc...) asparagine glycosylation is found at asparagine 98 and asparagine 117. Residues aspartate 325 and histidine 328 contribute to the active site. Asparagine 343 carries N-linked (GlcNAc...) asparagine glycosylation.

It belongs to the 'GDSL' lipolytic enzyme family.

The protein localises to the secreted. This Arabidopsis thaliana (Mouse-ear cress) protein is GDSL esterase/lipase At2g04570.